The following is a 137-amino-acid chain: MLSPKRTKFRRYHRIRSKGTANCSNTIVFGEFGIQALTCSWITSRQIEAGRRAITRYVKRGGKLWIRIFPDKPITFRPPETRMGSGKGAPELWVSVVRSGNMLYEILGVSEVTARGAMRIASYKLPVKTKFIKKVKN.

Belongs to the universal ribosomal protein uL16 family. In terms of assembly, part of the 50S ribosomal subunit.

Its subcellular location is the plastid. The protein resides in the chloroplast. In Bigelowiella natans (Pedinomonas minutissima), this protein is Large ribosomal subunit protein uL16c.